Consider the following 565-residue polypeptide: Methionine--tRNA ligase (565 aa).

The 'HIGH' region motif lies at 16–26; sequence PYAYGVPHLGN. Zn(2+) is bound by residues Cys148, Cys151, Cys161, and Cys164. The short motif at 338 to 342 is the 'KMSKS' region element; it reads KFSKS. An ATP-binding site is contributed by Lys341.

This sequence belongs to the class-I aminoacyl-tRNA synthetase family. MetG type 1 subfamily. It depends on Zn(2+) as a cofactor.

It is found in the cytoplasm. It catalyses the reaction tRNA(Met) + L-methionine + ATP = L-methionyl-tRNA(Met) + AMP + diphosphate. Functionally, is required not only for elongation of protein synthesis but also for the initiation of all mRNA translation through initiator tRNA(fMet) aminoacylation. The chain is Methionine--tRNA ligase from Thermofilum pendens (strain DSM 2475 / Hrk 5).